We begin with the raw amino-acid sequence, 161 residues long: Nucleotide-binding protein Bamb_2603 (161 aa).

It belongs to the YajQ family.

In terms of biological role, nucleotide-binding protein. The polypeptide is Nucleotide-binding protein Bamb_2603 (Burkholderia ambifaria (strain ATCC BAA-244 / DSM 16087 / CCUG 44356 / LMG 19182 / AMMD) (Burkholderia cepacia (strain AMMD))).